The chain runs to 340 residues: MPEDDVRNKFLDAGDSDDDAGHGSDSEDDFQKGGRNAKRRRVSDDEDSEADDFTDAEEEHDQDDAESKDAPAKDGQETTDGKEKKDGKKEKEKKSVLASDLPGMTKPLTKKNLIVTEEAIKKSGVVYISRVPPFMTPAKLRSLLEPYGKLNRIFLAPEDPVARRKRIRSGGNKKKMFTEGWIEFVKKKDAKKACELLNARPIGGKKGSYYRDDIWNLLYLKGFKWHNLTEQIAAENAERSSRMRAEISKTTKENKEFVRNVERAKVLQGIQAKKASKGSKAGGEGAAQVTESTIPSAAATTTTTTNDDKRRTFKQIPLAKKRKLDETQPEQVQRVLSKIF.

2 stretches are compositionally biased toward basic and acidic residues: residues Met-1 to Asp-12 and Asp-19 to Lys-32. The segment at Met-1–Gly-103 is disordered. Residues Asp-44–Asp-64 are compositionally biased toward acidic residues. Residues Ala-65–Ser-95 show a composition bias toward basic and acidic residues. Residues Gly-124–Ile-214 enclose the RRM domain. The tract at residues Ala-272 to Pro-329 is disordered.

It belongs to the ESF2/ABP1 family.

Its subcellular location is the nucleus. It is found in the nucleolus. Functionally, involved in the small subunit (SSU) processome assembly and function, and in the 18S rRNA synthesis. Required for the early cleavages at sites A0, A1 and A2. The protein is Pre-rRNA-processing protein esf-2 (esf-2) of Neurospora crassa (strain ATCC 24698 / 74-OR23-1A / CBS 708.71 / DSM 1257 / FGSC 987).